Here is a 975-residue protein sequence, read N- to C-terminus: C-1-tetrahydrofolate synthase, mitochondrial (975 aa).

The transit peptide at 1–34 directs the protein to the mitochondrion; the sequence is MLSRLSLLSNSRAFQQARWRIYRLKVSPTVHASQ. A methylenetetrahydrofolate dehydrogenase and cyclohydrolase region spans residues 35 to 343; the sequence is YHILSGRKLA…KPLPLHLESP (309 aa). Residues 83-87 and 130-132 contribute to the substrate site; these read YVRMK and IQL. NADP(+)-binding positions include 201-203 and Ser226; that span reads GRS. 301–305 is a substrate binding site; sequence PGGVG. Residues 344–975 form a formyltetrahydrofolate synthetase region; that stretch reads VPSDIDISRA…DDDGEIEGLF (632 aa). 408 to 415 contacts ATP; it reads TPLGEGKS.

The protein in the N-terminal section; belongs to the tetrahydrofolate dehydrogenase/cyclohydrolase family. It in the C-terminal section; belongs to the formate--tetrahydrofolate ligase family. As to quaternary structure, homodimer.

It localises to the mitochondrion. It carries out the reaction (6R)-5,10-methylene-5,6,7,8-tetrahydrofolate + NADP(+) = (6R)-5,10-methenyltetrahydrofolate + NADPH. The enzyme catalyses (6R)-5,10-methenyltetrahydrofolate + H2O = (6R)-10-formyltetrahydrofolate + H(+). It catalyses the reaction (6S)-5,6,7,8-tetrahydrofolate + formate + ATP = (6R)-10-formyltetrahydrofolate + ADP + phosphate. It functions in the pathway one-carbon metabolism; tetrahydrofolate interconversion. Its function is as follows. Mitochondrial isozyme of C-1-tetrahydrofolate synthase. The trifunctional enzyme catalyzes the interconversion of the one-carbon derivatives of tetrahydrofolate (THF) between different oxidation states by the enzymatic activities 10-formyltetrahydrofolate synthetase, 5,lO-methenyltetrahydrofolate cyclohydrolase, and 5,lO-methylenetetrahydrofolate dehydrogenase. In Saccharomyces cerevisiae (strain ATCC 204508 / S288c) (Baker's yeast), this protein is C-1-tetrahydrofolate synthase, mitochondrial.